A 103-amino-acid polypeptide reads, in one-letter code: Large ribosomal subunit protein uL24 (103 aa).

This sequence belongs to the universal ribosomal protein uL24 family. As to quaternary structure, part of the 50S ribosomal subunit.

Its function is as follows. One of two assembly initiator proteins, it binds directly to the 5'-end of the 23S rRNA, where it nucleates assembly of the 50S subunit. Functionally, one of the proteins that surrounds the polypeptide exit tunnel on the outside of the subunit. The polypeptide is Large ribosomal subunit protein uL24 (Agathobacter rectalis (strain ATCC 33656 / DSM 3377 / JCM 17463 / KCTC 5835 / VPI 0990) (Eubacterium rectale)).